We begin with the raw amino-acid sequence, 307 residues long: uncharacterized protein (307 aa).

Residues 54-307 (RHYLSTSMRV…KALPVDFFRE (254 aa)) enclose the EAL domain. 2 consecutive transmembrane segments (helical) span residues 158-178 (PGFL…AHAL) and 203-223 (ALGV…LAYL).

It is found in the cell membrane. This is an uncharacterized protein from Mycobacterium tuberculosis (strain CDC 1551 / Oshkosh).